Reading from the N-terminus, the 687-residue chain is Solute carrier organic anion transporter family member 1B2 (687 aa).

Over 1–28 (MDHTQQSRKAAEAQPSRSKQTRFCDGFK) the chain is Cytoplasmic. A helical membrane pass occupies residues 29–48 (LFLAALSFSYICKALGGVVM). Topologically, residues 49-67 (KSSITQIERRFDIPSSISG) are extracellular. Residues 68 to 88 (LIDGGFEIGNLLVIVFVSYFG) form a helical membrane-spanning segment. Topologically, residues 89 to 94 (SKLHRP) are cytoplasmic. Residues 95-119 (KLIGIGCFIMGIGSILTALPHFFMG) form a helical membrane-spanning segment. At 120–165 (YYKYAKENDIGSLGNSTLTCFINQMTSPTGPSPEIVEKGCEKGLKS) the chain is on the extracellular side. N-linked (GlcNAc...) asparagine glycosylation is present at asparagine 134. A helical membrane pass occupies residues 166 to 194 (HMWIYVLMGNMLRGIGETPIVPLGISYLD). Residues 195–213 (DFAKEGHTSMHLGTLHTIA) lie on the Cytoplasmic side of the membrane. The helical transmembrane segment at 214–234 (MIGPILGFIMSSVFAKIYVDV) threads the bilayer. Over 235–252 (GYVDLNSVRITPNDARWV) the chain is Extracellular. Residues 253–277 (GAWWLSFIVNGLLCITSSIPFFFLP) form a helical membrane-spanning segment. Residues 278–328 (KIPKRSQEERKNSVSLHAPKTDEEKKHMTNLTKQEEQDPSNMTGFLRSLRS) are Cytoplasmic-facing. A disordered region spans residues 286-311 (ERKNSVSLHAPKTDEEKKHMTNLTKQ). 2 positions are modified to phosphoserine: serine 290 and serine 292. The helical transmembrane segment at 329–350 (ILTNEIYVIFLILTLLQVSGFI) threads the bilayer. The Extracellular segment spans residues 351 to 370 (GSFTYLFKFIEQQFGRTASQ). Residues 371-394 (ANFLLGIITIPTMATAMFLGGYIV) traverse the membrane as a helical segment. The Cytoplasmic portion of the chain corresponds to 395–398 (KKFK). The helical transmembrane segment at 399–422 (LTSVGIAKFVFFTSSVAYAFQFLY) threads the bilayer. Topologically, residues 423 to 531 (FPLLCENKPF…YKCKTNYYFY (109 aa)) are extracellular. In terms of domain architecture, Kazal-like spans 450 to 507 (DVPLSYCNSDCSCDKNQWEPICGENGVTYISPCLAGCKSFRGDKKPNNTEFYDCSCIS). Intrachain disulfides connect cysteine 456/cysteine 486, cysteine 462/cysteine 482, and cysteine 471/cysteine 505. N-linked (GlcNAc...) asparagine glycans are attached at residues asparagine 496 and asparagine 511. Residues 532–554 (IILQVTVSFFTAMGSPSLILILM) traverse the membrane as a helical segment. The Cytoplasmic portion of the chain corresponds to 555–563 (KSVQPELKS). A helical transmembrane segment spans residues 564-589 (LAMGFHSLIIRALGGILAPIYYGAFI). Residues 590 to 623 (DRTCIKWSVTSCGKRGACRLYNSRLFGFSYLGLN) are Extracellular-facing. A helical transmembrane segment spans residues 624 to 641 (LALKTPPLFLYVVLIYFT). Over 642 to 687 (KRKYKRNDNKTLENGRQFTDEGNPDSVNKNGYYCVPYDEQSNETPL) the chain is Cytoplasmic. Phosphothreonine is present on threonine 660. A Phosphoserine modification is found at serine 667.

The protein belongs to the organo anion transporter (TC 2.A.60) family. Liver specific. Expression is highest in central perivenous hepatocytes and lowest in the periportal region. Isoform 1 predominates. Not detected in heart, brain, kidney, skeletal muscle, lung, testis or spleen.

It localises to the basolateral cell membrane. The catalysed reaction is estrone 3-sulfate(out) = estrone 3-sulfate(in). The enzyme catalyses taurocholate(out) = taurocholate(in). It catalyses the reaction prostaglandin E2(out) = prostaglandin E2(in). It carries out the reaction L-thyroxine(out) = L-thyroxine(in). Mediates the Na(+)-independent uptake of organic anions such as taurochlate, bromosulfophthalein and steroid conjugates (estrone 3-sulfate, 17-beta-glucuronosyl estradiol, dehydroepiandrosterone sulfate). Also transports prostaglandin E2 and L-thyroxine (T4). Shows a pH-sensitive substrate specificity which may be ascribed to the protonation state of the binding site and leads to a stimulation of substrate transport in an acidic microenvironment. Hydrogencarbonate/HCO3(-) acts as the probable counteranion that exchanges for organic anions. The protein is Solute carrier organic anion transporter family member 1B2 (Slco1b2) of Rattus norvegicus (Rat).